Reading from the N-terminus, the 530-residue chain is Membrane-bound lytic murein transglycosylase F (530 aa).

A signal peptide spans 1-27 (MTPFAYKLPIRALWLGLLSLLLVGCQI). The segment at 28–279 (DSEPKSELEK…SLEEKYIGHI (252 aa)) is non-LT domain. The interval 280–530 (GAFDYVDTRA…SAKPSTESKN (251 aa)) is LT domain. Glutamate 324 is an active-site residue. The tract at residues 505–530 (ALESESLENSESSAEPSAKPSTESKN) is disordered. A compositionally biased stretch (low complexity) spans 513–530 (NSESSAEPSAKPSTESKN).

In the N-terminal section; belongs to the bacterial solute-binding protein 3 family. The protein in the C-terminal section; belongs to the transglycosylase Slt family.

The protein localises to the cell outer membrane. The catalysed reaction is Exolytic cleavage of the (1-&gt;4)-beta-glycosidic linkage between N-acetylmuramic acid (MurNAc) and N-acetylglucosamine (GlcNAc) residues in peptidoglycan, from either the reducing or the non-reducing ends of the peptidoglycan chains, with concomitant formation of a 1,6-anhydrobond in the MurNAc residue.. Murein-degrading enzyme that degrades murein glycan strands and insoluble, high-molecular weight murein sacculi, with the concomitant formation of a 1,6-anhydromuramoyl product. Lytic transglycosylases (LTs) play an integral role in the metabolism of the peptidoglycan (PG) sacculus. Their lytic action creates space within the PG sacculus to allow for its expansion as well as for the insertion of various structures such as secretion systems and flagella. This is Membrane-bound lytic murein transglycosylase F from Vibrio cholerae serotype O1 (strain ATCC 39541 / Classical Ogawa 395 / O395).